Reading from the N-terminus, the 503-residue chain is Cardiolipin synthase (503 aa).

3 helical membrane-spanning segments follow: residues 5-25 (LNVLAFFALLFAALYISRGFL), 30-50 (VGTLSVVFTLSVIFIGIIIFF), and 59-79 (LTWLLVLAAFPVVGFFFYLMF). 2 consecutive PLD phosphodiesterase domains span residues 238–265 (INYRNHRKIIVIDGVVGFVGGLNIGDEY) and 416–443 (NRGFMHSKIIIVDHEIASIGTSNMDMRS). Active-site residues include H243, K245, D250, H421, K423, and D428.

Belongs to the phospholipase D family. Cardiolipin synthase subfamily.

Its subcellular location is the cell membrane. The enzyme catalyses 2 a 1,2-diacyl-sn-glycero-3-phospho-(1'-sn-glycerol) = a cardiolipin + glycerol. In terms of biological role, catalyzes the reversible phosphatidyl group transfer from one phosphatidylglycerol molecule to another to form cardiolipin (CL) (diphosphatidylglycerol) and glycerol. The sequence is that of Cardiolipin synthase (cls) from Alkalihalophilus pseudofirmus (strain ATCC BAA-2126 / JCM 17055 / OF4) (Bacillus pseudofirmus).